Here is a 177-residue protein sequence, read N- to C-terminus: ATP synthase subunit delta (177 aa).

It belongs to the ATPase delta chain family. As to quaternary structure, F-type ATPases have 2 components, F(1) - the catalytic core - and F(0) - the membrane proton channel. F(1) has five subunits: alpha(3), beta(3), gamma(1), delta(1), epsilon(1). F(0) has three main subunits: a(1), b(2) and c(10-14). The alpha and beta chains form an alternating ring which encloses part of the gamma chain. F(1) is attached to F(0) by a central stalk formed by the gamma and epsilon chains, while a peripheral stalk is formed by the delta and b chains.

The protein resides in the cell inner membrane. Its function is as follows. F(1)F(0) ATP synthase produces ATP from ADP in the presence of a proton or sodium gradient. F-type ATPases consist of two structural domains, F(1) containing the extramembraneous catalytic core and F(0) containing the membrane proton channel, linked together by a central stalk and a peripheral stalk. During catalysis, ATP synthesis in the catalytic domain of F(1) is coupled via a rotary mechanism of the central stalk subunits to proton translocation. This protein is part of the stalk that links CF(0) to CF(1). It either transmits conformational changes from CF(0) to CF(1) or is implicated in proton conduction. This chain is ATP synthase subunit delta, found in Flavobacterium johnsoniae (strain ATCC 17061 / DSM 2064 / JCM 8514 / BCRC 14874 / CCUG 350202 / NBRC 14942 / NCIMB 11054 / UW101) (Cytophaga johnsonae).